The following is a 368-amino-acid chain: GTPase Obg (368 aa).

An Obg domain is found at 1–161; the sequence is MRFVDEATIT…RSLRLELKIL (161 aa). Residues 162–337 enclose the OBG-type G domain; the sequence is ADAGLLGLPN…VVAEMWRMRD (176 aa). GTP-binding positions include 168-175, 193-197, 217-220, 290-293, and 318-320; these read GLPNAGKS, FTTLI, DIPG, NKID, and SAL. 2 residues coordinate Mg(2+): S175 and T195.

Belongs to the TRAFAC class OBG-HflX-like GTPase superfamily. OBG GTPase family. As to quaternary structure, monomer. Requires Mg(2+) as cofactor.

Its subcellular location is the cytoplasm. In terms of biological role, an essential GTPase which binds GTP, GDP and possibly (p)ppGpp with moderate affinity, with high nucleotide exchange rates and a fairly low GTP hydrolysis rate. Plays a role in control of the cell cycle, stress response, ribosome biogenesis and in those bacteria that undergo differentiation, in morphogenesis control. In Nitratidesulfovibrio vulgaris (strain DSM 19637 / Miyazaki F) (Desulfovibrio vulgaris), this protein is GTPase Obg.